A 549-amino-acid chain; its full sequence is DNA ligase 1 (549 aa).

Glu-212 is an ATP binding site. Lys-214 functions as the N6-AMP-lysine intermediate in the catalytic mechanism. The ATP site is built by Arg-219, Arg-234, Glu-264, Phe-310, Arg-387, and Lys-393.

The protein belongs to the ATP-dependent DNA ligase family. Mg(2+) serves as cofactor.

It catalyses the reaction ATP + (deoxyribonucleotide)n-3'-hydroxyl + 5'-phospho-(deoxyribonucleotide)m = (deoxyribonucleotide)n+m + AMP + diphosphate.. Functionally, DNA ligase that seals nicks in double-stranded DNA during DNA replication, DNA recombination and DNA repair. The sequence is that of DNA ligase 1 from Methanosarcina barkeri (strain Fusaro / DSM 804).